The primary structure comprises 360 residues: MKASMLAKLDQLAERLEEVNALLAREDATANIDQYRKLSREHAELSPVAEQYGFYRQAQDDLATAQALLDDPEMKDFAADEIASARERLESLEGSLQKLLLPKDPNDDRNLILEIRAGTGGEESALFAGDLLRMYTRFAERQRWQVEIMSESESDLGGYKEVIVRIAGDAAFSRLKFESGGHRVQRVPATEAQGRIHTSACTVAVMPEADEVGDVEINPSDLRIDTFRASGAGGQHVNKTDSAVRLTHLPTGIVVECQDDRSQHRNKDKAMKVLAARIKDQQMRAAQAKEASTRRNLIGSGDRSDRIRTYNFPQGRVTDHRINLTLYKIDMIMDGDLEELVSALAAEHQADQLAALGEDS.

Residue glutamine 235 is modified to N5-methylglutamine.

It belongs to the prokaryotic/mitochondrial release factor family. Post-translationally, methylated by PrmC. Methylation increases the termination efficiency of RF1.

It is found in the cytoplasm. Functionally, peptide chain release factor 1 directs the termination of translation in response to the peptide chain termination codons UAG and UAA. In Cupriavidus pinatubonensis (strain JMP 134 / LMG 1197) (Cupriavidus necator (strain JMP 134)), this protein is Peptide chain release factor 1.